The sequence spans 139 residues: Putative pre-16S rRNA nuclease (139 aa).

It belongs to the YqgF nuclease family.

The protein localises to the cytoplasm. Functionally, could be a nuclease involved in processing of the 5'-end of pre-16S rRNA. The polypeptide is Putative pre-16S rRNA nuclease (Dictyoglomus thermophilum (strain ATCC 35947 / DSM 3960 / H-6-12)).